The following is a 54-amino-acid chain: Putative collagen-like domain-containing protein 065L (54 aa).

The disordered stretch occupies residues methionine 1–phenylalanine 54. In terms of domain architecture, Collagen-like spans proline 7–alanine 51. Residues glycine 26–glycine 35 are compositionally biased toward gly residues. A compositionally biased stretch (low complexity) spans proline 42–phenylalanine 54.

The polypeptide is Putative collagen-like domain-containing protein 065L (Dryophytes versicolor (chameleon treefrog)).